The sequence spans 727 residues: Rho-related BTB domain-containing protein 2 (727 aa).

A rho-like region spans residues 1 to 210 (MDSDMDYERP…DNAIRAALIS (210 aa)). Residues 21–28 (GDNAVGKT), 84–88 (DTFGD), and 140–143 (CQLD) contribute to the GTP site. BTB domains lie at 266–442 (ADVI…DENE) and 500–567 (SDVT…TSSP). Residues 304-333 (ELGGPSEPGGTHPEDHQGHSDQHHHHHHHH) form a disordered region. A compositionally biased stretch (basic and acidic residues) spans 315-324 (HPEDHQGHSD). The segment at 703 to 727 (FWNSPSSPSSSAASSSSPSSSSAVV) is disordered. Residues 706 to 727 (SPSSPSSSAASSSSPSSSSAVV) are compositionally biased toward low complexity.

It belongs to the small GTPase superfamily. Rho family. As to quaternary structure, interacts with HSP90AA1 and HSP90AB1. Forms a complex with CUL3 and RBX1. Interacts (via BTB 1 domain) with CUL3. Interacts with MSI2. In terms of processing, autoubiquitinated by RHOBTB2-CUL3-RBX1 ubiquitin ligase complex. Ubiquitous, with highest levels in neural tissues. Expression is also detected in fetal lung, heart, and brain.

Its function is as follows. Regulator of cell proliferation and apoptosis. It likely functions as a substrate-adapter that recruits key substrates, e.g. MSI2, to CUL3-based ubiquitin ligase complexes for degradation. Required for MSI2 ubiquitination and degradation. In Homo sapiens (Human), this protein is Rho-related BTB domain-containing protein 2 (RHOBTB2).